The sequence spans 273 residues: DNA repair protein RecO (273 aa).

The segment at 250 to 273 (NVGQNPSGKDDLNERRDVDGTGES) is disordered. A compositionally biased stretch (basic and acidic residues) spans 257–273 (GKDDLNERRDVDGTGES).

Belongs to the RecO family.

Involved in DNA repair and RecF pathway recombination. In Desulfitobacterium hafniense (strain Y51), this protein is DNA repair protein RecO.